We begin with the raw amino-acid sequence, 349 residues long: Methylthioribose-1-phosphate isomerase (349 aa).

Residues 49-51 (RGA), R92, and Q199 each bind substrate. Catalysis depends on D240, which acts as the Proton donor. 250 to 251 (NK) lines the substrate pocket.

The protein belongs to the eIF-2B alpha/beta/delta subunits family. MtnA subfamily.

It catalyses the reaction 5-(methylsulfanyl)-alpha-D-ribose 1-phosphate = 5-(methylsulfanyl)-D-ribulose 1-phosphate. It functions in the pathway amino-acid biosynthesis; L-methionine biosynthesis via salvage pathway; L-methionine from S-methyl-5-thio-alpha-D-ribose 1-phosphate: step 1/6. Catalyzes the interconversion of methylthioribose-1-phosphate (MTR-1-P) into methylthioribulose-1-phosphate (MTRu-1-P). This chain is Methylthioribose-1-phosphate isomerase, found in Syntrophobacter fumaroxidans (strain DSM 10017 / MPOB).